A 342-amino-acid chain; its full sequence is Tetraacyldisaccharide 4'-kinase (342 aa).

An ATP-binding site is contributed by 68-75 (TVGGTGKT).

This sequence belongs to the LpxK family.

The enzyme catalyses a lipid A disaccharide + ATP = a lipid IVA + ADP + H(+). The protein operates within glycolipid biosynthesis; lipid IV(A) biosynthesis; lipid IV(A) from (3R)-3-hydroxytetradecanoyl-[acyl-carrier-protein] and UDP-N-acetyl-alpha-D-glucosamine: step 6/6. Its function is as follows. Transfers the gamma-phosphate of ATP to the 4'-position of a tetraacyldisaccharide 1-phosphate intermediate (termed DS-1-P) to form tetraacyldisaccharide 1,4'-bis-phosphate (lipid IVA). The polypeptide is Tetraacyldisaccharide 4'-kinase (Burkholderia ambifaria (strain MC40-6)).